The following is a 125-amino-acid chain: uncharacterized protein (125 aa).

A helical membrane pass occupies residues 96–113 (LFMMSIVSSYVCYITVLL).

The protein localises to the membrane. This is an uncharacterized protein from Saccharomyces cerevisiae (strain ATCC 204508 / S288c) (Baker's yeast).